The sequence spans 235 residues: Probable inactive serine protease 37 (235 aa).

A signal peptide spans 1 to 19 (MKYVFYLGVLAGTFFFADS). One can recognise a Peptidase S1 domain in the interval 20–233 (SVQKEDPAPY…YVSWIENTAK (214 aa)). 3 disulfides stabilise this stretch: C40–C56, C131–C198, and C163–C177.

This sequence belongs to the peptidase S1 family. As to expression, testis-specific. Expressed in spermatids (at protein level).

The protein resides in the cytoplasmic vesicle. Its subcellular location is the secretory vesicle. It is found in the acrosome. The protein localises to the secreted. Plays a role in male fertility. May have a role in sperm migration or binding to zona-intact eggs. Involved in the activation of the proacrosin/acrosin system. The sequence is that of Probable inactive serine protease 37 from Homo sapiens (Human).